Reading from the N-terminus, the 30-residue chain is MITDSQVFIGLVIALVPAILAFKLGLSLYE.

A helical transmembrane segment spans residues 7-27 (VFIGLVIALVPAILAFKLGLS).

This sequence belongs to the PsaM family.

The protein localises to the plastid. Its subcellular location is the chloroplast thylakoid membrane. This is Photosystem I reaction center subunit XII from Cyanidium caldarium (Red alga).